The chain runs to 693 residues: Elongation factor G (693 aa).

The tr-type G domain maps to 8–282; it reads AKTRNIGIMA…AVIDYLPSPL (275 aa). Residues 17-24, 81-85, and 135-138 contribute to the GTP site; these read AHVDAGKT, DTPGH, and NKMD.

It belongs to the TRAFAC class translation factor GTPase superfamily. Classic translation factor GTPase family. EF-G/EF-2 subfamily.

The protein localises to the cytoplasm. Its function is as follows. Catalyzes the GTP-dependent ribosomal translocation step during translation elongation. During this step, the ribosome changes from the pre-translocational (PRE) to the post-translocational (POST) state as the newly formed A-site-bound peptidyl-tRNA and P-site-bound deacylated tRNA move to the P and E sites, respectively. Catalyzes the coordinated movement of the two tRNA molecules, the mRNA and conformational changes in the ribosome. The sequence is that of Elongation factor G from Streptococcus thermophilus (strain CNRZ 1066).